The primary structure comprises 456 residues: MPTPMTPVKVGALACQRNSFLFDGFKTLVVSCEPTKNKKGEIEGYEIELQDTILFPEGGGQPSDSGFLKIVEGNRNSSKIEKILVSHVSRFGLHAKHHVNDYIEPGTTVEVAVDEQKRMDYMQQHTGQHLLSAILERNYKVDTVSWSMGGIITKKKPVLEPSDYFNYIELNRKLTLDEITNVSDEINQLIINFPQEIIVEERIGEETVDEVSTSKIPDDYDLSKGVLRTIHIGDIDSNPCCGTHLKCTSQIGSILILSNQSAVRGSNSRLYFMCGKRVSLYAKSVNKILLDSKNLLSCSETQISEKITRQTKQIQQLNKREQYWIKRLARTASEELMNTLKASGKKRAYFMEEEYGTLELLLQIHKEVSNFLKDDTEGYEIILCGYERQTNTGSLLILSESGEKIANLAANLGSILQNLKGGGGKKGGKWQGKITSISNAEFAALSDYLSHDFASC.

Residues histidine 125, histidine 129, cysteine 240, and histidine 244 each coordinate Zn(2+).

Belongs to the class-II aminoacyl-tRNA synthetase family. Alax-L subfamily. Zn(2+) is required as a cofactor.

In terms of biological role, may function in trans to edit the amino acid moiety from incorrectly charged tRNA(Ala). This is Putative alanyl-tRNA editing protein alaX from Saccharomyces cerevisiae (strain ATCC 204508 / S288c) (Baker's yeast).